We begin with the raw amino-acid sequence, 104 residues long: Pyrimidine/purine nucleoside phosphorylase (104 aa).

This sequence belongs to the nucleoside phosphorylase PpnP family.

The catalysed reaction is a purine D-ribonucleoside + phosphate = a purine nucleobase + alpha-D-ribose 1-phosphate. It catalyses the reaction adenosine + phosphate = alpha-D-ribose 1-phosphate + adenine. It carries out the reaction cytidine + phosphate = cytosine + alpha-D-ribose 1-phosphate. The enzyme catalyses guanosine + phosphate = alpha-D-ribose 1-phosphate + guanine. The catalysed reaction is inosine + phosphate = alpha-D-ribose 1-phosphate + hypoxanthine. It catalyses the reaction thymidine + phosphate = 2-deoxy-alpha-D-ribose 1-phosphate + thymine. It carries out the reaction uridine + phosphate = alpha-D-ribose 1-phosphate + uracil. The enzyme catalyses xanthosine + phosphate = alpha-D-ribose 1-phosphate + xanthine. Its function is as follows. Catalyzes the phosphorolysis of diverse nucleosides, yielding D-ribose 1-phosphate and the respective free bases. Can use uridine, adenosine, guanosine, cytidine, thymidine, inosine and xanthosine as substrates. Also catalyzes the reverse reactions. In Herminiimonas arsenicoxydans, this protein is Pyrimidine/purine nucleoside phosphorylase.